Here is a 201-residue protein sequence, read N- to C-terminus: Small ribosomal subunit protein uS4c (201 aa).

A disordered region spans residues 13-43 (RRLGDLPGLSRKAIKRPYPPGEHGQKPRKPS). The region spanning 90 to 154 (MRLDNTIFRL…SKQLVESYLA (65 aa)) is the S4 RNA-binding domain.

This sequence belongs to the universal ribosomal protein uS4 family. Part of the 30S ribosomal subunit. Contacts protein S5. The interaction surface between S4 and S5 is involved in control of translational fidelity.

It localises to the plastid. It is found in the chloroplast. Its function is as follows. One of the primary rRNA binding proteins, it binds directly to 16S rRNA where it nucleates assembly of the body of the 30S subunit. Functionally, with S5 and S12 plays an important role in translational accuracy. The chain is Small ribosomal subunit protein uS4c (rps4) from Porphyra purpurea (Red seaweed).